Reading from the N-terminus, the 73-residue chain is uncharacterized protein (73 aa).

Residues A37–A57 form a helical membrane-spanning segment.

It is found in the membrane. This is an uncharacterized protein from Natronomonas pharaonis (strain ATCC 35678 / DSM 2160 / CIP 103997 / JCM 8858 / NBRC 14720 / NCIMB 2260 / Gabara) (Halobacterium pharaonis).